A 514-amino-acid polypeptide reads, in one-letter code: Cytochrome P450 monooxygenase aneD (514 aa).

Residues isoleucine 6–isoleucine 26 form a helical membrane-spanning segment. N-linked (GlcNAc...) asparagine glycosylation is found at asparagine 113, asparagine 261, and asparagine 347. Heme is bound at residue cysteine 424.

It belongs to the cytochrome P450 family. Heme serves as cofactor.

It is found in the membrane. It carries out the reaction asperaculane D + reduced [NADPH--hemoprotein reductase] + O2 = asperaculane E + oxidized [NADPH--hemoprotein reductase] + H2O + H(+). The protein operates within secondary metabolite biosynthesis. In terms of biological role, cytochrome P450 monooxygenase; part of the gene cluster that mediates the biosynthesis of aculenes, a unique type of norsesquiterpenes that contain a nordaucane skeleton linked to an L-proline moiety and are of mixed biosynthetic origin. The pathway begins with the synthesis of dauca-4,7-diene by the terpene cyclase aneC using farnesyl pyrophosphate (FPP) as substrate. The cytochrome P450 monooxygenase aneF then performs the initial oxidation at C-12 of dauca-4,7-diene to yield asperaculane D. Asperaculane D is substrate of the cytochrome P450 monooxygenase aneD for C-10 hydroxylation to yield asperaculane E. The cytochrome P450 monooxygenase aneG then converts asperaculane E into aculene D via C-2 oxidation. The monomodular nonribosomal peptide synthtase aneB adenylates L-proline and the thiohydrolase aneE transfers this activated L-proline derivative to aculenes D and C to produce respectively aculenes B and A. The dioxygenase aneA converts aculene D into aculene C, and aculene B into aculene A by introducing the 5,6-alkene moiety. Asperculanes A, B, C and F, as well as 14-prolyl asperculane C, might be shunt products of the pathway. This chain is Cytochrome P450 monooxygenase aneD, found in Aspergillus aculeatus (strain ATCC 16872 / CBS 172.66 / WB 5094).